The following is a 376-amino-acid chain: UDP-N-acetylglucosamine 2-epimerase (376 aa).

Residues arginine 10, lysine 15, aspartate 95, glutamate 117, histidine 213, glutamine 271, phenylalanine 276, 290–292 (SGG), glutamate 296, and arginine 313 each bind substrate.

The protein belongs to the UDP-N-acetylglucosamine 2-epimerase family. Homodimer.

The protein localises to the cytoplasm. It carries out the reaction UDP-N-acetyl-alpha-D-glucosamine = UDP-N-acetyl-alpha-D-mannosamine. The protein operates within bacterial outer membrane biogenesis; enterobacterial common antigen biosynthesis. Its function is as follows. Catalyzes the reversible epimerization at C-2 of UDP-N-acetylglucosamine (UDP-GlcNAc) and thereby provides bacteria with UDP-N-acetylmannosamine (UDP-ManNAc), the activated donor of ManNAc residues. This Escherichia coli O157:H7 protein is UDP-N-acetylglucosamine 2-epimerase.